A 477-amino-acid polypeptide reads, in one-letter code: UDP-galactose-lipid carrier transferase (477 aa).

Helical transmembrane passes span 16–36 (SLAL…IVLI), 52–72 (LDLK…WFWV), 93–113 (TILI…WELS), 115–135 (WIWI…RACV), 175–195 (VIAF…GVPV), and 284–304 (FDLV…VILI). Residues 305–477 (FMVSRDGGAP…GVVLKRDGAY (173 aa)) are Cytoplasmic-facing.

This sequence belongs to the bacterial sugar transferase family.

Its subcellular location is the cell membrane. The protein operates within glycan metabolism; exopolysaccharide biosynthesis. In terms of biological role, involved in the biosynthesis of amylovoran which functions as a virulence factor. May act as a sugar transferase and may be involved in the export of the repeating unit by flipping the lipid carrier to the periplasmic face of the inner membrane. The protein is UDP-galactose-lipid carrier transferase (amsG) of Erwinia amylovora (Fire blight bacteria).